Consider the following 138-residue polypeptide: uncharacterized protein (138 aa).

Residues 9–133 form the MsrB domain; the sequence is EDEWKKELGP…NSASLEFHNE (125 aa). Cys-49, Cys-52, Cys-97, and Cys-100 together coordinate Zn(2+). Residue Cys-122 is the Nucleophile of the active site.

This sequence belongs to the MsrB Met sulfoxide reductase family. It depends on Zn(2+) as a cofactor.

The protein localises to the cytoplasm. It localises to the nucleus. This is an uncharacterized protein from Schizosaccharomyces pombe (strain 972 / ATCC 24843) (Fission yeast).